A 230-amino-acid polypeptide reads, in one-letter code: Small ribosomal subunit protein uS7m (230 aa).

The protein belongs to the universal ribosomal protein uS7 family. As to quaternary structure, part of the small ribosomal subunit.

The protein resides in the mitochondrion. One of the primary rRNA binding proteins, it binds directly to 18S rRNA where it nucleates assembly of the head domain of the small subunit. This Marchantia polymorpha (Common liverwort) protein is Small ribosomal subunit protein uS7m (RPS7).